A 128-amino-acid polypeptide reads, in one-letter code: Large ribosomal subunit protein eL22 (128 aa).

T62 carries the phosphothreonine modification. A Phosphoserine modification is found at S66. K69 is modified (N6-succinyllysine).

This sequence belongs to the eukaryotic ribosomal protein eL22 family. Component of the large ribosomal subunit.

Its subcellular location is the cytoplasm. In terms of biological role, component of the large ribosomal subunit. The ribosome is a large ribonucleoprotein complex responsible for the synthesis of proteins in the cell. This Rattus norvegicus (Rat) protein is Large ribosomal subunit protein eL22 (Rpl22).